A 77-amino-acid chain; its full sequence is Acyl carrier protein (77 aa).

The 76-residue stretch at 1 to 76 (MDREQRIKEI…DVINYLNEKL (76 aa)) folds into the Carrier domain. Serine 36 bears the O-(pantetheine 4'-phosphoryl)serine mark.

The protein belongs to the acyl carrier protein (ACP) family. In terms of processing, 4'-phosphopantetheine is transferred from CoA to a specific serine of apo-ACP by AcpS. This modification is essential for activity because fatty acids are bound in thioester linkage to the sulfhydryl of the prosthetic group.

Its subcellular location is the cytoplasm. It participates in lipid metabolism; fatty acid biosynthesis. Its function is as follows. Carrier of the growing fatty acid chain in fatty acid biosynthesis. In Hydrogenobaculum sp. (strain Y04AAS1), this protein is Acyl carrier protein.